Here is a 76-residue protein sequence, read N- to C-terminus: Small ribosomal subunit protein bS18 (76 aa).

Belongs to the bacterial ribosomal protein bS18 family. In terms of assembly, part of the 30S ribosomal subunit. Forms a tight heterodimer with protein bS6.

In terms of biological role, binds as a heterodimer with protein bS6 to the central domain of the 16S rRNA, where it helps stabilize the platform of the 30S subunit. In Azotobacter vinelandii (strain DJ / ATCC BAA-1303), this protein is Small ribosomal subunit protein bS18.